Here is a 186-residue protein sequence, read N- to C-terminus: Peptidoglycan-recognition protein SD (186 aa).

Residues 1-18 (MTWIGLLIVGLTAIAVQG) form the signal peptide. One can recognise an N-acetylmuramoyl-L-alanine amidase domain in the interval 47–169 (AVIAHTAGGA…RQVSATKSPG (123 aa)). A disulfide bond links cysteine 57 and cysteine 63. N-linked (GlcNAc...) asparagine glycosylation occurs at asparagine 181.

The protein belongs to the N-acetylmuramoyl-L-alanine amidase 2 family. In terms of tissue distribution, in larvae, it is mainly expressed in fat body. Also expressed in uninduced hemocytes and mbn-2 cells.

Its subcellular location is the secreted. Functionally, peptidoglycan-recognition protein that plays a key role in innate immunity by binding to peptidoglycans (PGN) of Gram-positive bacteria and activating the Toll pathway. Has no activity against on Gram-negative bacteria and fungi. Shows some partial redundancy with PRPGP-SA in Gram-positive bacteria recognition. May act by activating the proteolytic cleavage of Spatzle and the subsequent activation of Toll pathway. Recognizes S.aureus PGN. This is Peptidoglycan-recognition protein SD (PGRP-SD) from Drosophila melanogaster (Fruit fly).